We begin with the raw amino-acid sequence, 72 residues long: Translation initiation factor IF-1 (72 aa).

The region spanning 1 to 72 is the S1-like domain; that stretch reads MAKDDVIEVE…TRGRITYRYK (72 aa). Tyr-60 carries the post-translational modification Phosphotyrosine.

Belongs to the IF-1 family. Component of the 30S ribosomal translation pre-initiation complex which assembles on the 30S ribosome in the order IF-2 and IF-3, IF-1 and N-formylmethionyl-tRNA(fMet); mRNA recruitment can occur at any time during PIC assembly.

The protein resides in the cytoplasm. One of the essential components for the initiation of protein synthesis. Stabilizes the binding of IF-2 and IF-3 on the 30S subunit to which N-formylmethionyl-tRNA(fMet) subsequently binds. Helps modulate mRNA selection, yielding the 30S pre-initiation complex (PIC). Upon addition of the 50S ribosomal subunit IF-1, IF-2 and IF-3 are released leaving the mature 70S translation initiation complex. The protein is Translation initiation factor IF-1 of Bacillus licheniformis (strain ATCC 14580 / DSM 13 / JCM 2505 / CCUG 7422 / NBRC 12200 / NCIMB 9375 / NCTC 10341 / NRRL NRS-1264 / Gibson 46).